A 473-amino-acid polypeptide reads, in one-letter code: GTPase Der (473 aa).

2 EngA-type G domains span residues 3 to 167 and 203 to 378; these read FKVA…KGLE and LRVA…TFWN. Residues 9-16, 56-60, 119-122, 209-216, 256-260, and 321-324 each bind GTP; these read GRPNVGKS, DTAGL, NKCE, DTAGM, and NKWD. Residues 379 to 463 form the KH-like domain; that stretch reads ARVPTARLNR…PIRLFMRKTH (85 aa).

The protein belongs to the TRAFAC class TrmE-Era-EngA-EngB-Septin-like GTPase superfamily. EngA (Der) GTPase family. Associates with the 50S ribosomal subunit.

Its function is as follows. GTPase that plays an essential role in the late steps of ribosome biogenesis. This chain is GTPase Der, found in Parvibaculum lavamentivorans (strain DS-1 / DSM 13023 / NCIMB 13966).